Here is a 499-residue protein sequence, read N- to C-terminus: Cytochrome P450 71A27 (499 aa).

Residues 3–23 form a helical membrane-spanning segment; it reads MILISLCLTTLLAFLFLKPLL. C438 serves as a coordination point for heme.

The protein belongs to the cytochrome P450 family. It depends on heme as a cofactor.

The protein localises to the membrane. This Arabidopsis thaliana (Mouse-ear cress) protein is Cytochrome P450 71A27 (CYP71A27).